Consider the following 632-residue polypeptide: 1-deoxy-D-xylulose-5-phosphate synthase (632 aa).

A disordered region spans residues Met-1–Asp-25. Residues His-87 and Gly-128–Ser-130 each bind thiamine diphosphate. Asp-159 serves as a coordination point for Mg(2+). Thiamine diphosphate contacts are provided by residues Gly-160–Ala-161, Asn-188, Phe-295, and Glu-378. Asn-188 contributes to the Mg(2+) binding site.

This sequence belongs to the transketolase family. DXPS subfamily. As to quaternary structure, homodimer. The cofactor is Mg(2+). It depends on thiamine diphosphate as a cofactor.

The catalysed reaction is D-glyceraldehyde 3-phosphate + pyruvate + H(+) = 1-deoxy-D-xylulose 5-phosphate + CO2. The protein operates within metabolic intermediate biosynthesis; 1-deoxy-D-xylulose 5-phosphate biosynthesis; 1-deoxy-D-xylulose 5-phosphate from D-glyceraldehyde 3-phosphate and pyruvate: step 1/1. Catalyzes the acyloin condensation reaction between C atoms 2 and 3 of pyruvate and glyceraldehyde 3-phosphate to yield 1-deoxy-D-xylulose-5-phosphate (DXP). This Pseudomonas fluorescens (strain Pf0-1) protein is 1-deoxy-D-xylulose-5-phosphate synthase.